The following is a 260-amino-acid chain: Dehydrogenase/reductase SDR family member 4 (260 aa).

Residue 14–38 (IVTAATKGIGLAIAERLLDEGASVV) participates in NADP(+) binding. Ser-148 serves as a coordination point for substrate. Tyr-161 acts as the Proton acceptor in catalysis. Lys-165 contributes to the NADP(+) binding site.

The protein belongs to the short-chain dehydrogenases/reductases (SDR) family.

It carries out the reaction a secondary alcohol + NADP(+) = a ketone + NADPH + H(+). Its function is as follows. Catalyzes the reduction of isatin, 4-oxonon-2-enal, 9,10-phenanthrenequinone, menadione, 2,3-hexaenadione, 3,4-hexanedione and 2,3-heptanedione. The chain is Dehydrogenase/reductase SDR family member 4 from Caenorhabditis elegans.